Consider the following 412-residue polypeptide: Putative competence-damage inducible protein (412 aa).

The protein belongs to the CinA family.

This is Putative competence-damage inducible protein from Bacillus cereus (strain AH820).